The primary structure comprises 329 residues: Quinone oxidoreductase (329 aa).

Position 2 is an N-acetylalanine (Ala-2). The residue at position 23 (Lys-23) is an N6-acetyllysine. NADP(+)-binding positions include Tyr-53, 158-161 (SGGV), Gly-181, His-200, Asn-229, 246-249 (VGCR), and 269-271 (VSL). N6-succinyllysine is present on Lys-296.

The protein belongs to the zinc-containing alcohol dehydrogenase family. Quinone oxidoreductase subfamily. In terms of assembly, homotetramer.

The protein localises to the cytoplasm. The enzyme catalyses 2 a quinone + NADPH + H(+) = 2 a 1,4-benzosemiquinone + NADP(+). In terms of biological role, does not have alcohol dehydrogenase activity. Binds NADP and acts through a one-electron transfer process. Orthoquinones, such as 1,2-naphthoquinone or 9,10-phenanthrenequinone, are the best substrates (in vitro). May act in the detoxification of xenobiotics. Interacts with (AU)-rich elements (ARE) in the 3'-UTR of target mRNA species and enhances their stability. NADPH binding interferes with mRNA binding. In Rattus norvegicus (Rat), this protein is Quinone oxidoreductase (Cryz).